Reading from the N-terminus, the 219-residue chain is Thiamine-phosphate synthase (219 aa).

4-amino-2-methyl-5-(diphosphooxymethyl)pyrimidine-binding positions include 44-48 (QFREK) and asparagine 79. 2 residues coordinate Mg(2+): aspartate 80 and aspartate 99. Position 117 (serine 117) interacts with 4-amino-2-methyl-5-(diphosphooxymethyl)pyrimidine. 143–145 (TST) is a binding site for 2-[(2R,5Z)-2-carboxy-4-methylthiazol-5(2H)-ylidene]ethyl phosphate. Lysine 146 is a 4-amino-2-methyl-5-(diphosphooxymethyl)pyrimidine binding site. 2-[(2R,5Z)-2-carboxy-4-methylthiazol-5(2H)-ylidene]ethyl phosphate is bound by residues glycine 175 and 195–196 (IS).

It belongs to the thiamine-phosphate synthase family. Mg(2+) serves as cofactor.

The enzyme catalyses 2-[(2R,5Z)-2-carboxy-4-methylthiazol-5(2H)-ylidene]ethyl phosphate + 4-amino-2-methyl-5-(diphosphooxymethyl)pyrimidine + 2 H(+) = thiamine phosphate + CO2 + diphosphate. It catalyses the reaction 2-(2-carboxy-4-methylthiazol-5-yl)ethyl phosphate + 4-amino-2-methyl-5-(diphosphooxymethyl)pyrimidine + 2 H(+) = thiamine phosphate + CO2 + diphosphate. The catalysed reaction is 4-methyl-5-(2-phosphooxyethyl)-thiazole + 4-amino-2-methyl-5-(diphosphooxymethyl)pyrimidine + H(+) = thiamine phosphate + diphosphate. The protein operates within cofactor biosynthesis; thiamine diphosphate biosynthesis; thiamine phosphate from 4-amino-2-methyl-5-diphosphomethylpyrimidine and 4-methyl-5-(2-phosphoethyl)-thiazole: step 1/1. Its function is as follows. Condenses 4-methyl-5-(beta-hydroxyethyl)thiazole monophosphate (THZ-P) and 2-methyl-4-amino-5-hydroxymethyl pyrimidine pyrophosphate (HMP-PP) to form thiamine monophosphate (TMP). This chain is Thiamine-phosphate synthase, found in Bacillus thuringiensis subsp. konkukian (strain 97-27).